Consider the following 135-residue polypeptide: Ribonuclease P protein component 2 (135 aa).

Belongs to the eukaryotic/archaeal RNase P protein component 2 family. As to quaternary structure, consists of a catalytic RNA component and at least 4-5 protein subunits.

Its subcellular location is the cytoplasm. It catalyses the reaction Endonucleolytic cleavage of RNA, removing 5'-extranucleotides from tRNA precursor.. Functionally, part of ribonuclease P, a protein complex that generates mature tRNA molecules by cleaving their 5'-ends. In Methanococcus aeolicus (strain ATCC BAA-1280 / DSM 17508 / OCM 812 / Nankai-3), this protein is Ribonuclease P protein component 2.